The sequence spans 234 residues: Sugar fermentation stimulation protein A (234 aa).

The H-T-H motif DNA-binding region spans L201 to S220.

Belongs to the SfsA family.

Functionally, binds to DNA non-specifically. Could be a regulatory factor involved in maltose metabolism. This chain is Sugar fermentation stimulation protein A, found in Salmonella gallinarum (strain 287/91 / NCTC 13346).